The primary structure comprises 338 residues: Glycerol-3-phosphate dehydrogenase [NAD(P)+] (338 aa).

NADPH is bound by residues Ser-13, Trp-14, and Lys-108. 3 residues coordinate sn-glycerol 3-phosphate: Lys-108, Gly-139, and Ser-141. Ala-143 is a binding site for NADPH. Residues Lys-194, Asp-247, Ser-257, Arg-258, and Asn-259 each coordinate sn-glycerol 3-phosphate. Lys-194 acts as the Proton acceptor in catalysis. Arg-258 is a binding site for NADPH. NADPH-binding residues include Val-282 and Glu-284.

The protein belongs to the NAD-dependent glycerol-3-phosphate dehydrogenase family.

It is found in the cytoplasm. The enzyme catalyses sn-glycerol 3-phosphate + NAD(+) = dihydroxyacetone phosphate + NADH + H(+). The catalysed reaction is sn-glycerol 3-phosphate + NADP(+) = dihydroxyacetone phosphate + NADPH + H(+). Its pathway is membrane lipid metabolism; glycerophospholipid metabolism. Its function is as follows. Catalyzes the reduction of the glycolytic intermediate dihydroxyacetone phosphate (DHAP) to sn-glycerol 3-phosphate (G3P), the key precursor for phospholipid synthesis. In Streptococcus agalactiae serotype V (strain ATCC BAA-611 / 2603 V/R), this protein is Glycerol-3-phosphate dehydrogenase [NAD(P)+].